The chain runs to 95 residues: FXYD domain-containing ion transport regulator 6 (95 aa).

Residues 1-18 (MELVLVFLCSLLAPTVLA) form the signal peptide. Topologically, residues 19 to 35 (SAAEKEKEMDPFHYDYQ) are extracellular. Residues 36–58 (TLRIGGLVFAVVLFSVGILLILS) traverse the membrane as a helical segment. The Cytoplasmic segment spans residues 59-95 (RRCKCSFNQKPRAPGDEEAQVENLITANATEPQKAEN).

The protein belongs to the FXYD family. As to quaternary structure, regulatory subunit of the sodium/potassium-transporting ATPase which is composed of a catalytic alpha subunit, a non-catalytic beta subunit and an additional regulatory subunit. The regulatory subunit, a member of the FXYD protein family, modulates the enzymatic activity in a tissue- and isoform-specific way by changing affinities of the Na+/K+-ATPase toward Na(+), K(+) or ATP.

The protein localises to the cell membrane. Associates with and regulates the activity of the sodium/potassium-transporting ATPase (NKA) which catalyzes the hydrolysis of ATP coupled with the exchange of Na(+) and K(+) ions across the plasma membrane. Reduces the apparent affinity for intracellular Na(+) with no change in the apparent affinity for extracellular K(+). In addition to modulating NKA kinetics, may also function as a regulator of NKA localization to the plasma membrane. The polypeptide is FXYD domain-containing ion transport regulator 6 (FXYD6) (Pongo abelii (Sumatran orangutan)).